The chain runs to 272 residues: D-aminoacyl-tRNA deacylase (272 aa).

Belongs to the DtdA deacylase family. Monomer. Zn(2+) is required as a cofactor.

The catalysed reaction is a D-aminoacyl-tRNA + H2O = a tRNA + a D-alpha-amino acid + H(+). It catalyses the reaction glycyl-tRNA(Ala) + H2O = tRNA(Ala) + glycine + H(+). Functionally, D-aminoacyl-tRNA deacylase with broad substrate specificity. By recycling D-aminoacyl-tRNA to D-amino acids and free tRNA molecules, this enzyme counteracts the toxicity associated with the formation of D-aminoacyl-tRNA entities in vivo. This chain is D-aminoacyl-tRNA deacylase, found in Hyperthermus butylicus (strain DSM 5456 / JCM 9403 / PLM1-5).